Reading from the N-terminus, the 442-residue chain is Thymidine phosphorylase (442 aa).

It belongs to the thymidine/pyrimidine-nucleoside phosphorylase family. Homodimer.

The catalysed reaction is thymidine + phosphate = 2-deoxy-alpha-D-ribose 1-phosphate + thymine. It participates in pyrimidine metabolism; dTMP biosynthesis via salvage pathway; dTMP from thymine: step 1/2. Functionally, the enzymes which catalyze the reversible phosphorolysis of pyrimidine nucleosides are involved in the degradation of these compounds and in their utilization as carbon and energy sources, or in the rescue of pyrimidine bases for nucleotide synthesis. The sequence is that of Thymidine phosphorylase from Vibrio vulnificus (strain CMCP6).